Here is a 548-residue protein sequence, read N- to C-terminus: Chaperonin GroEL (548 aa).

ATP-binding positions include 30 to 33 (TLGP), Lys-51, 87 to 91 (DGTTT), Gly-415, 479 to 481 (NAA), and Asp-495.

It belongs to the chaperonin (HSP60) family. As to quaternary structure, forms a cylinder of 14 subunits composed of two heptameric rings stacked back-to-back. Interacts with the co-chaperonin GroES.

The protein localises to the cytoplasm. The enzyme catalyses ATP + H2O + a folded polypeptide = ADP + phosphate + an unfolded polypeptide.. Functionally, together with its co-chaperonin GroES, plays an essential role in assisting protein folding. The GroEL-GroES system forms a nano-cage that allows encapsulation of the non-native substrate proteins and provides a physical environment optimized to promote and accelerate protein folding. In Klebsiella pneumoniae (strain 342), this protein is Chaperonin GroEL.